We begin with the raw amino-acid sequence, 189 residues long: Protein GrpE (189 aa).

Residues 1–12 show a composition bias toward basic residues; the sequence is MDKKKHGSHAGA. Positions 1–36 are disordered; it reads MDKKKHGSHAGAHHTDEPAAETVAPAAEGAPAAADR. Positions 20–34 are enriched in low complexity; the sequence is AETVAPAAEGAPAAA.

This sequence belongs to the GrpE family. Homodimer.

Its subcellular location is the cytoplasm. Participates actively in the response to hyperosmotic and heat shock by preventing the aggregation of stress-denatured proteins, in association with DnaK and GrpE. It is the nucleotide exchange factor for DnaK and may function as a thermosensor. Unfolded proteins bind initially to DnaJ; upon interaction with the DnaJ-bound protein, DnaK hydrolyzes its bound ATP, resulting in the formation of a stable complex. GrpE releases ADP from DnaK; ATP binding to DnaK triggers the release of the substrate protein, thus completing the reaction cycle. Several rounds of ATP-dependent interactions between DnaJ, DnaK and GrpE are required for fully efficient folding. The sequence is that of Protein GrpE from Geobacter metallireducens (strain ATCC 53774 / DSM 7210 / GS-15).